We begin with the raw amino-acid sequence, 195 residues long: Adenylate kinase (195 aa).

8–16 (GIPGVGKTT) is an ATP binding site.

The protein belongs to the archaeal adenylate kinase family.

The protein localises to the cytoplasm. The enzyme catalyses AMP + ATP = 2 ADP. This Saccharolobus islandicus (strain M.14.25 / Kamchatka #1) (Sulfolobus islandicus) protein is Adenylate kinase.